Reading from the N-terminus, the 202-residue chain is MRLERLNYNKIKIFLTFDDLSERGLTKEDLWRNAPKVQQLFRDMMQEANKELGFEADGPIAVEVFSLQAQGMVVIVTKEHQEADTDDEFRDEFIEMQVTLDESEHILYEFATLDDVINLSNRLYNLDVTGGKLYTWDGRFYLWMEEEEQIQLLKADFIAILAEYGNPSTATIYRLMEYGKELMASQAIEQIHNYFVKKQNLS.

It belongs to the MecA family. As to quaternary structure, homodimer.

Functionally, enables the recognition and targeting of unfolded and aggregated proteins to the ClpC protease or to other proteins involved in proteolysis. Acts negatively in the development of competence by binding ComK and recruiting it to the ClpCP protease. When overexpressed, inhibits sporulation. Also involved in Spx degradation by ClpC. In Bacillus anthracis, this protein is Adapter protein MecA 2 (mecA2).